The primary structure comprises 286 residues: uncharacterized protein (286 aa).

This sequence belongs to the NmrA-type oxidoreductase family.

This is an uncharacterized protein from Bacillus subtilis (strain 168).